The following is a 480-amino-acid chain: Cysteine--tRNA ligase (480 aa).

Cys29 contributes to the Zn(2+) binding site. The 'HIGH' region motif lies at Val31–His41. The Zn(2+) site is built by Cys209, His234, and Glu238. Positions Lys266 to Ser270 match the 'KMSKS' region motif. Position 269 (Lys269) interacts with ATP.

This sequence belongs to the class-I aminoacyl-tRNA synthetase family. As to quaternary structure, monomer. The cofactor is Zn(2+).

It is found in the cytoplasm. It carries out the reaction tRNA(Cys) + L-cysteine + ATP = L-cysteinyl-tRNA(Cys) + AMP + diphosphate. This Geobacter sp. (strain M21) protein is Cysteine--tRNA ligase.